The primary structure comprises 539 residues: Chaperonin GroEL (539 aa).

Residues 29-32 (TLGP), 86-90 (DGTTT), Gly-413, 476-478 (NAA), and Asp-492 each bind ATP.

It belongs to the chaperonin (HSP60) family. In terms of assembly, forms a cylinder of 14 subunits composed of two heptameric rings stacked back-to-back. Interacts with the co-chaperonin GroES.

Its subcellular location is the cytoplasm. It catalyses the reaction ATP + H2O + a folded polypeptide = ADP + phosphate + an unfolded polypeptide.. Together with its co-chaperonin GroES, plays an essential role in assisting protein folding. The GroEL-GroES system forms a nano-cage that allows encapsulation of the non-native substrate proteins and provides a physical environment optimized to promote and accelerate protein folding. In Macrococcus caseolyticus (strain JCSC5402) (Macrococcoides caseolyticum), this protein is Chaperonin GroEL.